The following is a 342-amino-acid chain: Holliday junction branch migration complex subunit RuvB (342 aa).

The tract at residues 1 to 184 is large ATPase domain (RuvB-L); sequence MDNERVITAV…FGIVQRLEFY (184 aa). ATP-binding positions include I23, R24, G65, K68, T69, T70, 131-133, R174, Y184, and R221; that span reads EDY. T69 contacts Mg(2+). The segment at 185 to 255 is small ATPAse domain (RuvB-S); it reads SVDDLSGIVS…IAQRALDMLE (71 aa). The interval 258–342 is head domain (RuvB-H); the sequence is SCGLDGTDRR…PRQDGDLFND (85 aa). 2 residues coordinate DNA: R313 and R318.

Belongs to the RuvB family. As to quaternary structure, homohexamer. Forms an RuvA(8)-RuvB(12)-Holliday junction (HJ) complex. HJ DNA is sandwiched between 2 RuvA tetramers; dsDNA enters through RuvA and exits via RuvB. An RuvB hexamer assembles on each DNA strand where it exits the tetramer. Each RuvB hexamer is contacted by two RuvA subunits (via domain III) on 2 adjacent RuvB subunits; this complex drives branch migration. In the full resolvosome a probable DNA-RuvA(4)-RuvB(12)-RuvC(2) complex forms which resolves the HJ.

It is found in the cytoplasm. It carries out the reaction ATP + H2O = ADP + phosphate + H(+). Its function is as follows. The RuvA-RuvB-RuvC complex processes Holliday junction (HJ) DNA during genetic recombination and DNA repair, while the RuvA-RuvB complex plays an important role in the rescue of blocked DNA replication forks via replication fork reversal (RFR). RuvA specifically binds to HJ cruciform DNA, conferring on it an open structure. The RuvB hexamer acts as an ATP-dependent pump, pulling dsDNA into and through the RuvAB complex. RuvB forms 2 homohexamers on either side of HJ DNA bound by 1 or 2 RuvA tetramers; 4 subunits per hexamer contact DNA at a time. Coordinated motions by a converter formed by DNA-disengaged RuvB subunits stimulates ATP hydrolysis and nucleotide exchange. Immobilization of the converter enables RuvB to convert the ATP-contained energy into a lever motion, pulling 2 nucleotides of DNA out of the RuvA tetramer per ATP hydrolyzed, thus driving DNA branch migration. The RuvB motors rotate together with the DNA substrate, which together with the progressing nucleotide cycle form the mechanistic basis for DNA recombination by continuous HJ branch migration. Branch migration allows RuvC to scan DNA until it finds its consensus sequence, where it cleaves and resolves cruciform DNA. This Alcanivorax borkumensis (strain ATCC 700651 / DSM 11573 / NCIMB 13689 / SK2) protein is Holliday junction branch migration complex subunit RuvB.